A 199-amino-acid polypeptide reads, in one-letter code: N-(5'-phosphoribosyl)anthranilate isomerase (199 aa).

This sequence belongs to the TrpF family.

It catalyses the reaction N-(5-phospho-beta-D-ribosyl)anthranilate = 1-(2-carboxyphenylamino)-1-deoxy-D-ribulose 5-phosphate. The protein operates within amino-acid biosynthesis; L-tryptophan biosynthesis; L-tryptophan from chorismate: step 3/5. The polypeptide is N-(5'-phosphoribosyl)anthranilate isomerase (Sulfolobus acidocaldarius (strain ATCC 33909 / DSM 639 / JCM 8929 / NBRC 15157 / NCIMB 11770)).